We begin with the raw amino-acid sequence, 530 residues long: Estrogen receptor beta (530 aa).

Residues 1-148 (MEIKNSPSSL…SPNAKRDAHF (148 aa)) form a modulating region. A Phosphoserine; alternate modification is found at Ser-61. Residue Ser-61 is glycosylated (O-linked (GlcNAc) serine; alternate). Residues Ser-87 and Ser-105 each carry the phosphoserine; by MAPK modification. 2 consecutive NR C4-type zinc fingers follow at residues 149 to 169 (CPVC…CEGC) and 185 to 209 (CPAT…LRKC). Residues 149–214 (CPVCSDYASG…RLRKCYEVGM (66 aa)) constitute a DNA-binding region (nuclear receptor). The region spanning 264–498 (SPEQLVLTLL…DLLLEMLNAH (235 aa)) is the NR LBD domain. Over residues 506 to 515 (SISGSECSST) the composition is skewed to low complexity. The interval 506–530 (SISGSECSSTEDSKNKESSQNLQSQ) is disordered.

This sequence belongs to the nuclear hormone receptor family. NR3 subfamily. In terms of assembly, binds DNA as a homodimer. Can form a heterodimer with ESR1. Interacts with NCOA1, NCOA3, NCOA5 and NCOA6 coactivators, leading to a strong increase of transcription of target genes. Interacts with UBE1C and AKAP13. Interacts with DNTTIP2. Interacts with CCDC62 in the presence of estradiol/E2; this interaction seems to enhance the transcription of target genes. Interacts with PRMT2. Interacts with CCAR2 (via N-terminus) in a ligand-independent manner. Interacts with DNAAF4. Interacts with RBM39, in the presence of estradiol (E2). Interacts with STUB1/CHIP. Phosphorylation at Ser-87 and Ser-105 recruits NCOA1. In terms of tissue distribution, expressed in the CA1 region of the hippocampus, expression decreases with age (at protein level). Expressed in prostate, ovary, lung, liver, kidney, fat, bone, brain, uterus and testis.

Its subcellular location is the nucleus. Functionally, nuclear hormone receptor. Binds estrogens with an affinity similar to that of ESR1/ER-alpha, and activates expression of reporter genes containing estrogen response elements (ERE) in an estrogen-dependent manner. In terms of biological role, lacks ligand binding affinity and suppresses ESR1/ER-alpha and ESR2 isoform 1/ER-beta1 mediated transcriptional activation and may act as a dominant negative regulator of estrogen action. Its function is as follows. Unable to bind DNA and activate transcription due to the truncation of the DNA binding domain. This chain is Estrogen receptor beta (Esr2), found in Rattus norvegicus (Rat).